The primary structure comprises 62 residues: Alpha-conotoxin-like S1.1 (62 aa).

Positions 1 to 21 are cleaved as a signal peptide; the sequence is MGMRMMFTVFLLVVLAITVVS. Positions 22–48 are excised as a propeptide; that stretch reads FPLDRESDGANAEARTHDHEKHALDRN. Disulfide bonds link cysteine 50/cysteine 56 and cysteine 51/cysteine 61. Cysteine 61 carries the cysteine amide modification.

Belongs to the conotoxin A superfamily. As to expression, expressed by the venom duct.

It is found in the secreted. In terms of biological role, alpha-conotoxins act on postsynaptic membranes, they bind to the nicotinic acetylcholine receptors (nAChR) and thus inhibit them. In Conus striatus (Striated cone), this protein is Alpha-conotoxin-like S1.1.